The following is a 208-amino-acid chain: ATP synthase subunit b (208 aa).

Polar residues predominate over residues 1–18 (MFVSTAFAQTATESQPAS). A disordered region spans residues 1-26 (MFVSTAFAQTATESQPASTAGEHGAA). The helical transmembrane segment at 56–78 (SQVLWLAITFGLFYLFLSRVVLP) threads the bilayer.

This sequence belongs to the ATPase B chain family. F-type ATPases have 2 components, F(1) - the catalytic core - and F(0) - the membrane proton channel. F(1) has five subunits: alpha(3), beta(3), gamma(1), delta(1), epsilon(1). F(0) has three main subunits: a(1), b(2) and c(10-14). The alpha and beta chains form an alternating ring which encloses part of the gamma chain. F(1) is attached to F(0) by a central stalk formed by the gamma and epsilon chains, while a peripheral stalk is formed by the delta and b chains.

The protein resides in the cell inner membrane. Functionally, f(1)F(0) ATP synthase produces ATP from ADP in the presence of a proton or sodium gradient. F-type ATPases consist of two structural domains, F(1) containing the extramembraneous catalytic core and F(0) containing the membrane proton channel, linked together by a central stalk and a peripheral stalk. During catalysis, ATP synthesis in the catalytic domain of F(1) is coupled via a rotary mechanism of the central stalk subunits to proton translocation. Component of the F(0) channel, it forms part of the peripheral stalk, linking F(1) to F(0). This Brucella melitensis biotype 1 (strain ATCC 23456 / CCUG 17765 / NCTC 10094 / 16M) protein is ATP synthase subunit b.